A 370-amino-acid polypeptide reads, in one-letter code: Putative glutamate--cysteine ligase 2 (370 aa).

It belongs to the glutamate--cysteine ligase type 2 family. YbdK subfamily.

It catalyses the reaction L-cysteine + L-glutamate + ATP = gamma-L-glutamyl-L-cysteine + ADP + phosphate + H(+). In terms of biological role, ATP-dependent carboxylate-amine ligase which exhibits weak glutamate--cysteine ligase activity. The polypeptide is Putative glutamate--cysteine ligase 2 (Methylibium petroleiphilum (strain ATCC BAA-1232 / LMG 22953 / PM1)).